The chain runs to 259 residues: Small ribosomal subunit protein uS2 (259 aa).

It belongs to the universal ribosomal protein uS2 family.

This Dinoroseobacter shibae (strain DSM 16493 / NCIMB 14021 / DFL 12) protein is Small ribosomal subunit protein uS2.